Here is a 373-residue protein sequence, read N- to C-terminus: Chorismate synthase (373 aa).

Residue Arg-46 coordinates NADP(+). Residues 123–125, 251–252, Gly-295, 310–314, and Arg-337 each bind FMN; these read RSS, NA, and KPTPS.

It belongs to the chorismate synthase family. Requires FMNH2 as cofactor.

The catalysed reaction is 5-O-(1-carboxyvinyl)-3-phosphoshikimate = chorismate + phosphate. The protein operates within metabolic intermediate biosynthesis; chorismate biosynthesis; chorismate from D-erythrose 4-phosphate and phosphoenolpyruvate: step 7/7. Catalyzes the anti-1,4-elimination of the C-3 phosphate and the C-6 proR hydrogen from 5-enolpyruvylshikimate-3-phosphate (EPSP) to yield chorismate, which is the branch point compound that serves as the starting substrate for the three terminal pathways of aromatic amino acid biosynthesis. This reaction introduces a second double bond into the aromatic ring system. The sequence is that of Chorismate synthase from Methanococcus maripaludis (strain C5 / ATCC BAA-1333).